The primary structure comprises 594 residues: Metastasis-associated protein MTA3 (594 aa).

One can recognise a BAH domain in the interval Met-1–Lys-147. The ELM2 domain maps to Gly-148–Gly-259. The SANT domain occupies Asp-266–Arg-318. Residues Cys-379–Cys-406 form a GATA-type; atypical zinc finger. Residues Ser-428 and Ser-430 each carry the phosphoserine modification. Position 455 is a phosphothreonine (Thr-455). Position 519 is a phosphoserine (Ser-519).

It belongs to the metastasis-associated protein family. As to quaternary structure, component of the nucleosome remodeling and deacetylase (NuRD) repressor complex, composed of core proteins MTA1, MTA2, MTA3, RBBP4, RBBP7, HDAC1, HDAC2, MBD2, MBD3, and peripherally associated proteins CDK2AP1, CDK2AP2, GATAD2A, GATAD2B, CHD3, CHD4 and CHD5. The exact stoichiometry of the NuRD complex is unknown, and some subunits such as MBD2 and MBD3, GATAD2A and GATAD2B, and CHD3, CHD4 and CHD5 define mutually exclusive NuRD complexes. Interacts with BCL6. Interacts with NACC2. Interacts with PWWP2B. In terms of tissue distribution, expressed in germinal centers of lymphoid tissues. No expression in nonepithelial cells.

Its subcellular location is the nucleus. It localises to the cytoplasm. Its function is as follows. Acts as a component of the histone deacetylase NuRD complex which participates in the remodeling of chromatin. Plays a role in maintenance of the normal epithelial architecture through the repression of SNAI1 transcription in a histone deacetylase-dependent manner, and thus the regulation of E-cadherin levels. Contributes to transcriptional repression by BCL6. In Homo sapiens (Human), this protein is Metastasis-associated protein MTA3 (MTA3).